The chain runs to 156 residues: Putative pre-16S rRNA nuclease (156 aa).

The protein belongs to the YqgF nuclease family.

The protein localises to the cytoplasm. In terms of biological role, could be a nuclease involved in processing of the 5'-end of pre-16S rRNA. This Ehrlichia ruminantium (strain Gardel) protein is Putative pre-16S rRNA nuclease.